The following is a 385-amino-acid chain: 8-amino-7-oxononanoate synthase (385 aa).

R21 provides a ligand contact to substrate. Residue 108–109 (GY) participates in pyridoxal 5'-phosphate binding. H133 serves as a coordination point for substrate. Pyridoxal 5'-phosphate-binding residues include S179, H207, and T233. Position 236 is an N6-(pyridoxal phosphate)lysine (K236). Residue T350 participates in substrate binding.

This sequence belongs to the class-II pyridoxal-phosphate-dependent aminotransferase family. BioF subfamily. In terms of assembly, homodimer. The cofactor is pyridoxal 5'-phosphate.

The enzyme catalyses 6-carboxyhexanoyl-[ACP] + L-alanine + H(+) = (8S)-8-amino-7-oxononanoate + holo-[ACP] + CO2. The protein operates within cofactor biosynthesis; biotin biosynthesis. Functionally, catalyzes the decarboxylative condensation of pimeloyl-[acyl-carrier protein] and L-alanine to produce 8-amino-7-oxononanoate (AON), [acyl-carrier protein], and carbon dioxide. The polypeptide is 8-amino-7-oxononanoate synthase (Pectobacterium atrosepticum (strain SCRI 1043 / ATCC BAA-672) (Erwinia carotovora subsp. atroseptica)).